Consider the following 464-residue polypeptide: Trigger factor (464 aa).

The PPIase FKBP-type domain occupies 162 to 243; that stretch reads GDFISIDLSA…VGTVKERELP (82 aa). Positions 435 to 464 are disordered; that stretch reads ELFGNGEAETEEAASTDEAASDSTESEDQK.

The protein belongs to the FKBP-type PPIase family. Tig subfamily.

The protein localises to the cytoplasm. The enzyme catalyses [protein]-peptidylproline (omega=180) = [protein]-peptidylproline (omega=0). Involved in protein export. Acts as a chaperone by maintaining the newly synthesized protein in an open conformation. Functions as a peptidyl-prolyl cis-trans isomerase. In Rhodococcus jostii (strain RHA1), this protein is Trigger factor.